A 402-amino-acid polypeptide reads, in one-letter code: Flavohemoprotein (402 aa).

In terms of domain architecture, Globin spans 1-136 (MLSEKTIEIV…IADAFISIEA (136 aa)). Histidine 85 serves as a coordination point for heme b. Residues tyrosine 95 and glutamate 135 each act as charge relay system in the active site. Residues 147-402 (GGWKDFRNFV…EFFGPAASLQ (256 aa)) form a reductase region. Positions 150–260 (KDFRNFVVVK…SAPAGDFVLN (111 aa)) constitute an FAD-binding FR-type domain. FAD is bound by residues tyrosine 188 and 204-207 (RQYS). 273–278 (GVGITP) contacts NADP(+). An FAD-binding site is contributed by 394–397 (FFGP).

This sequence belongs to the globin family. Two-domain flavohemoproteins subfamily. The protein in the C-terminal section; belongs to the flavoprotein pyridine nucleotide cytochrome reductase family. Requires heme b as cofactor. It depends on FAD as a cofactor.

It catalyses the reaction 2 nitric oxide + NADPH + 2 O2 = 2 nitrate + NADP(+) + H(+). The enzyme catalyses 2 nitric oxide + NADH + 2 O2 = 2 nitrate + NAD(+) + H(+). In terms of biological role, is involved in NO detoxification in an aerobic process, termed nitric oxide dioxygenase (NOD) reaction that utilizes O(2) and NAD(P)H to convert NO to nitrate, which protects the bacterium from various noxious nitrogen compounds. Therefore, plays a central role in the inducible response to nitrosative stress. The sequence is that of Flavohemoprotein from Bacillus cereus (strain ATCC 10987 / NRS 248).